Reading from the N-terminus, the 168-residue chain is Mitochondrial ATP-independent inner membrane protease subunit 1a (168 aa).

The transit peptide at 1–47 (MRMTFLSYLKQWRGTAKEAFENVSIVAKFLCLLHVTDRYIISTTHVH) directs the protein to the mitochondrion. Catalysis depends on residues Ser-50 and Lys-94.

It belongs to the peptidase S26 family. IMP1 subfamily. As to quaternary structure, heterodimer of 2 subunits, IMP1A/B and IMP12.

It is found in the mitochondrion inner membrane. Catalyzes the removal of transit peptides required for the targeting of proteins from the mitochondrial matrix, across the inner membrane, into the inter-membrane space. The polypeptide is Mitochondrial ATP-independent inner membrane protease subunit 1a (Arabidopsis thaliana (Mouse-ear cress)).